A 289-amino-acid polypeptide reads, in one-letter code: Phosphatidylserine decarboxylase proenzyme (289 aa).

Residues aspartate 89, histidine 146, and serine 252 each act as charge relay system; for autoendoproteolytic cleavage activity in the active site. Residue serine 252 is the Schiff-base intermediate with substrate; via pyruvic acid; for decarboxylase activity of the active site. Serine 252 carries the pyruvic acid (Ser); by autocatalysis modification.

Belongs to the phosphatidylserine decarboxylase family. PSD-B subfamily. Prokaryotic type I sub-subfamily. As to quaternary structure, heterodimer of a large membrane-associated beta subunit and a small pyruvoyl-containing alpha subunit. Pyruvate serves as cofactor. In terms of processing, is synthesized initially as an inactive proenzyme. Formation of the active enzyme involves a self-maturation process in which the active site pyruvoyl group is generated from an internal serine residue via an autocatalytic post-translational modification. Two non-identical subunits are generated from the proenzyme in this reaction, and the pyruvate is formed at the N-terminus of the alpha chain, which is derived from the carboxyl end of the proenzyme. The autoendoproteolytic cleavage occurs by a canonical serine protease mechanism, in which the side chain hydroxyl group of the serine supplies its oxygen atom to form the C-terminus of the beta chain, while the remainder of the serine residue undergoes an oxidative deamination to produce ammonia and the pyruvoyl prosthetic group on the alpha chain. During this reaction, the Ser that is part of the protease active site of the proenzyme becomes the pyruvoyl prosthetic group, which constitutes an essential element of the active site of the mature decarboxylase.

It is found in the cell membrane. The catalysed reaction is a 1,2-diacyl-sn-glycero-3-phospho-L-serine + H(+) = a 1,2-diacyl-sn-glycero-3-phosphoethanolamine + CO2. It participates in phospholipid metabolism; phosphatidylethanolamine biosynthesis; phosphatidylethanolamine from CDP-diacylglycerol: step 2/2. Catalyzes the formation of phosphatidylethanolamine (PtdEtn) from phosphatidylserine (PtdSer). The polypeptide is Phosphatidylserine decarboxylase proenzyme (Shewanella putrefaciens (strain CN-32 / ATCC BAA-453)).